Reading from the N-terminus, the 232-residue chain is Phosphatidylserine decarboxylase proenzyme (232 aa).

Catalysis depends on Ser190, which acts as the Schiff-base intermediate with substrate; via pyruvic acid. Ser190 is subject to Pyruvic acid (Ser); by autocatalysis.

It belongs to the phosphatidylserine decarboxylase family. PSD-A subfamily. In terms of assembly, heterodimer of a large membrane-associated beta subunit and a small pyruvoyl-containing alpha subunit. Pyruvate is required as a cofactor. Post-translationally, is synthesized initially as an inactive proenzyme. Formation of the active enzyme involves a self-maturation process in which the active site pyruvoyl group is generated from an internal serine residue via an autocatalytic post-translational modification. Two non-identical subunits are generated from the proenzyme in this reaction, and the pyruvate is formed at the N-terminus of the alpha chain, which is derived from the carboxyl end of the proenzyme. The post-translation cleavage follows an unusual pathway, termed non-hydrolytic serinolysis, in which the side chain hydroxyl group of the serine supplies its oxygen atom to form the C-terminus of the beta chain, while the remainder of the serine residue undergoes an oxidative deamination to produce ammonia and the pyruvoyl prosthetic group on the alpha chain.

It localises to the cell membrane. The enzyme catalyses a 1,2-diacyl-sn-glycero-3-phospho-L-serine + H(+) = a 1,2-diacyl-sn-glycero-3-phosphoethanolamine + CO2. The protein operates within phospholipid metabolism; phosphatidylethanolamine biosynthesis; phosphatidylethanolamine from CDP-diacylglycerol: step 2/2. In terms of biological role, catalyzes the formation of phosphatidylethanolamine (PtdEtn) from phosphatidylserine (PtdSer). The sequence is that of Phosphatidylserine decarboxylase proenzyme from Rhizobium johnstonii (strain DSM 114642 / LMG 32736 / 3841) (Rhizobium leguminosarum bv. viciae).